A 438-amino-acid polypeptide reads, in one-letter code: Coenzyme A disulfide reductase (438 aa).

8–33 (GAVAGGATCASQIRRLDKESDIIIFE) provides a ligand contact to FAD. 5 residues coordinate substrate: threonine 15, glutamine 19, arginine 22, serine 39, and asparagine 42. Catalysis depends on cysteine 43, which acts as the Nucleophile. Catalysis depends on cysteine 43, which acts as the Redox-active. Residue lysine 71 participates in substrate binding. 151–166 (VLVVGAGYVSLEVLEN) is a binding site for NADP(+). 267 to 277 (TNVPNIYAIGD) provides a ligand contact to FAD. Residue histidine 299 participates in substrate binding. An FAD-binding site is contributed by tyrosine 419. Lysine 427 is a binding site for substrate.

It belongs to the class-III pyridine nucleotide-disulfide oxidoreductase family. As to quaternary structure, homodimer. The cofactor is FAD.

It carries out the reaction NADP(+) + 2 CoA = CoA-disulfide + NADPH + H(+). In terms of biological role, catalyzes specifically the NADPH-dependent reduction of coenzyme A disulfide. Is also active with other disulfide substrates containing at least one 4'-phosphopantethienyl moiety such as 4,4'-diphosphopantethine, but is not able to reduce oxidized glutathione, cystine, pantethine, or H(2)O(2). This is Coenzyme A disulfide reductase (cdr) from Staphylococcus aureus (strain NCTC 8325 / PS 47).